The sequence spans 368 residues: MYDWFSEMRKKDPVYYDGNIWQVFSYRYTKEVLNNFSKFSSDLTGYHERLEDLRNGKIRFDIPTRYTMLTSDPPLHDELRSMSADIFSPQKLQTLETFIRETTRSLLDSIDPREDDIVKKLAVPLPIIVISKILGLPIEDKEKFKEWSDLVAFRLGKPGEIFELGKKYLELIGYVKDHLNSGTEVVSRVVNSNLSDIEKLGYIILLLIAGNETTTNLISNSVIDFTRFNLWQRIREENLYLKAIEEALRYSPPVMRTVRKTKERVKLGDQTIEEGEYVRVWIASANRDEEVFHDGEKFIPDRNPNPHLSFGSGIHLCLGAPLARLEARIAIEEFSKRFRHIEILDTEKVPNEVLNGYKRLVVRLKSNE.

Residues His76, Arg80, Thr257, Arg259, His315, and Cys317 each coordinate heme.

This sequence belongs to the cytochrome P450 family. Heme is required as a cofactor.

Its subcellular location is the cytoplasm. It catalyses the reaction 2 a phenolic donor + H2O2 = 2 a phenolic radical donor + 2 H2O. Its function is as follows. The endogenous substrate is not known. In vitro, catalyzes the H(2)O(2)-dependent epoxidation of styrene, cis-beta-methylstyrene, and cis-stilbene with retention of stereochemistry. Is able to use cumene hydroperoxide (CHP) or tert-butyl hydroperoxide (TBHP) instead of H(2)O(2) as the electron acceptor. Can also hydroxylate fatty acids such as lauric acid. The polypeptide is Cytochrome P450 119 (cyp119) (Sulfolobus acidocaldarius (strain ATCC 33909 / DSM 639 / JCM 8929 / NBRC 15157 / NCIMB 11770)).